The sequence spans 192 residues: UPF0301 protein BTH_I1462 (192 aa).

Belongs to the UPF0301 (AlgH) family.

This Burkholderia thailandensis (strain ATCC 700388 / DSM 13276 / CCUG 48851 / CIP 106301 / E264) protein is UPF0301 protein BTH_I1462.